The following is a 396-amino-acid chain: 1-deoxy-D-xylulose 5-phosphate reductoisomerase (396 aa).

NADPH contacts are provided by T15, G16, S17, I18, G41, and N129. K130 lines the 1-deoxy-D-xylulose 5-phosphate pocket. Position 131 (E131) interacts with NADPH. D155 contributes to the Mn(2+) binding site. Residues S156, E157, S182, and H205 each contribute to the 1-deoxy-D-xylulose 5-phosphate site. E157 is a binding site for Mn(2+). G211 serves as a coordination point for NADPH. The 1-deoxy-D-xylulose 5-phosphate site is built by S218, N223, K224, and E227. E227 is a Mn(2+) binding site.

This sequence belongs to the DXR family. The cofactor is Mg(2+). Mn(2+) is required as a cofactor.

The catalysed reaction is 2-C-methyl-D-erythritol 4-phosphate + NADP(+) = 1-deoxy-D-xylulose 5-phosphate + NADPH + H(+). It functions in the pathway isoprenoid biosynthesis; isopentenyl diphosphate biosynthesis via DXP pathway; isopentenyl diphosphate from 1-deoxy-D-xylulose 5-phosphate: step 1/6. Catalyzes the NADPH-dependent rearrangement and reduction of 1-deoxy-D-xylulose-5-phosphate (DXP) to 2-C-methyl-D-erythritol 4-phosphate (MEP). The polypeptide is 1-deoxy-D-xylulose 5-phosphate reductoisomerase (Xanthomonas euvesicatoria pv. vesicatoria (strain 85-10) (Xanthomonas campestris pv. vesicatoria)).